The primary structure comprises 90 residues: Small ribosomal subunit protein bS20 (90 aa).

The interval 1 to 25 (MANSPSAKKRAKQAEKRRSHNASLR) is disordered. The segment covering 7-20 (AKKRAKQAEKRRSH) has biased composition (basic residues).

The protein belongs to the bacterial ribosomal protein bS20 family.

Functionally, binds directly to 16S ribosomal RNA. This is Small ribosomal subunit protein bS20 from Pseudomonas fluorescens (strain Pf0-1).